The sequence spans 630 residues: A-type voltage-gated potassium channel KCND2 (630 aa).

Over 1–184 (MAAGVAAWLP…FENPHTSTMA (184 aa)) the chain is Cytoplasmic. The interaction with KCNIP1, KCNIP2, and other family members stretch occupies residues 2 to 20 (AAGVAAWLPFARAAAIGWM). Threonine 38 carries the post-translational modification Phosphothreonine. An interaction with KCNIP1 region spans residues 71-90 (ERDFFYHPETQQYFFDRDPD). Zn(2+) is bound by residues histidine 105, cysteine 111, cysteine 132, and cysteine 133. Residues 185-206 (LVFYYVTGFFIAVSVIANVVET) form a helical membrane-spanning segment. Topologically, residues 207–226 (VPCGSSPGHIKELPCGERYA) are extracellular. The chain crosses the membrane as a helical span at residues 227-249 (VAFFCLDTACVMIFTVEYLLRLA). Residues 250-256 (AAPSRYR) are Cytoplasmic-facing. A helical membrane pass occupies residues 257–281 (FVRSVMSIIDVVAILPYYIGLVMTD). Over 282-287 (NEDVSG) the chain is Extracellular. A helical; Voltage-sensor transmembrane segment spans residues 288–307 (AFVTLRVFRVFRIFKFSRHS). Residues 308–321 (QGLRILGYTLKSCA) lie on the Cytoplasmic side of the membrane. An S4-S5 linker region spans residues 308-321 (QGLRILGYTLKSCA). A helical transmembrane segment spans residues 322-345 (SELGFLLFSLTMAIIIFATVMFYA). Over 346-357 (EKGSSASKFTSI) the chain is Extracellular. Positions 358 to 369 (PAAFWYTIVTMT) form an intramembrane region, helical. Positions 370, 371, 372, and 373 each coordinate K(+). Positions 370-375 (TLGYGD) match the Selectivity filter motif. The stretch at 370-377 (TLGYGDMV) is an intramembrane region. Over 378–380 (PKT) the chain is Extracellular. A helical membrane pass occupies residues 381–403 (IAGKIFGSICSLSGVLVIALPVP). The Cytoplasmic segment spans residues 404-630 (VIVSNFSRIY…GGNIVRVSAL (227 aa)). A Phosphoserine modification is found at serine 438. Positions 474-489 (FETQHHHLLHCLEKTT) are required for dendritic targeting. Residues 474–630 (FETQHHHLLH…GGNIVRVSAL (157 aa)) are important for normal channel activation and inactivation, for interaction with KCNIP2, and probably other family members as well. Phosphoserine is present on residues serine 548, serine 552, serine 572, and serine 575. The disordered stretch occupies residues 600 to 623 (IPTPPVTTPEGDDRPESPEYSGGN). Residues threonine 602 and threonine 607 each carry the phosphothreonine modification. Phosphoserine is present on serine 616. A PDZ-binding motif is present at residues 627-630 (VSAL).

It belongs to the potassium channel family. D (Shal) (TC 1.A.1.2) subfamily. Kv4.2/KCND2 sub-subfamily. As to quaternary structure, homotetramer or heterotetramer with KCND1 or KCND3. Associates with the regulatory subunits KCNIP2, KCNIP3 and KCNIP4. Interacts with the regulatory subunit KCNIP1; this interaction mediates the capture of both the N- and C-terminus of KCND2, preventing N-type inactivation and stabilizing the S6 conformation, thereby accelerating closed state inactivation and recovery. Interacts with DPP10, DLG4 and DLG1. In vivo, probably exists as heteromeric complex containing variable proportions of KCND1, KCND2, KCND3, KCNIP1, KCNIP2, KCNIP3, KCNIP4, DPP6 and DPP10. The tetrameric channel can associate with up to four regulatory subunits, such as KCNIP2 or KCNIP4. Interaction with KCNIP3 promotes tetramerization and formation of a functional potassium channel. Interaction with four KCNIP4 chains does not reduce interaction with DPP10. Probably part of a complex consisting of KCNIP1, KCNIP2 isoform 3 and KCND2. Interacts with FLNA and FLNC. Interacts with NCS1/FREQ. Identified in a complex with cAMP-dependent protein kinase (PKA), CAV3, AKAP6 and KCND3 in cardiac myocytes. Interacts (via S1 and S2 helices) with DPP6; this interaction stabilizes the conformation of the S1-S2 helices and facilitates S4 conformational change, including S4 sliding up and down, thereby accelerating activation, inactivation, and recovery. Post-translationally, phosphorylation at Ser-438 in response to MAPK activation is increased in stimulated dendrites. Interaction with KCNIP2 and DPP6 propomtes phosphorylation by PKA at Ser-552. Phosphorylation at Ser-552 has no effect on interaction with KCNIP3, but is required for the regulation of channel activity by KCNIP3. Phosphorylation at Ser-552 leads to KCND2 internalization. Phosphorylated by MAPK in response to signaling via the metabotropic glutamate receptor GRM5. Phosphorylation at Ser-616 is required for the down-regulation of neuronal A-type currents in response to signaling via GRM5. In terms of tissue distribution, detected in brain cortex, hippocampus, dentate gyrus, thalamus and cerebellum. Detected in neurons from the primary visual cortex. Detected in the supraoptic nucleus in hypothalamus, in hippocampus and the habenular nucleus of the thalamus. Detected in the bed nucleus of the stria terminalis. Detected in dendritic fields in the hippocampus CA1 layer, in stratum radiatum, stratum oriens, stratum lacunosum-moleculare and stratum pyramidale. Detected in dendritic fields in the hippocampus CA3 layer and in dentate gyrus. Detected in the cerebellum granule cell layer, where it localizes at synapses. Detected in the main olfactory bulb, especially in the granule cell layer and the external plexiform layer, but also the mitral layer. Detected in heart atrium and ventricle. Detected in heart left ventricle (at protein level). Highly expressed in heart and throughout the brain, with similar levels in cortex and hypothalamus, and much higher levels in hippocampus, dentate gyrus and the habenular nucleus of the thalamus. Detected in brain, and at lower levels in heart atrium and ventricle. Detected in neurons from the bed nucleus of the stria terminalis. Detected in aorta, cardiac and smooth muscle.

It localises to the cell membrane. It is found in the cell projection. The protein resides in the dendrite. Its subcellular location is the synapse. The protein localises to the perikaryon. It localises to the postsynaptic cell membrane. It is found in the dendritic spine. The protein resides in the sarcolemma. Its subcellular location is the cell junction. The protein localises to the membrane. It localises to the caveola. The enzyme catalyses K(+)(in) = K(+)(out). With respect to regulation, inhibited by 5 mM 4-aminopyridine (4-AP). Not inhibited by dendrotoxins and by tetraethylammonium (TEA). Inhibited by 10 mM flecainide and 20 mM quinidine. Inhibited by the heteropodatoxins HpTx(1), HpTx(2), and HpTx(3). Its function is as follows. Voltage-gated potassium channel that mediates transmembrane potassium transport in excitable membranes, primarily in the brain, but also in rodent heart. Mediates the major part of the dendritic A-type current I(SA) in brain neurons. This current is activated at membrane potentials that are below the threshold for action potentials. It regulates neuronal excitability, prolongs the latency before the first spike in a series of action potentials, regulates the frequency of repetitive action potential firing, shortens the duration of action potentials and regulates the back-propagation of action potentials from the neuronal cell body to the dendrites. Contributes to the regulation of the circadian rhythm of action potential firing in suprachiasmatic nucleus neurons, which regulates the circadian rhythm of locomotor activity. Functions downstream of the metabotropic glutamate receptor GRM5 and plays a role in neuronal excitability and in nociception mediated by activation of GRM5. Mediates the transient outward current I(to) in rodent heart left ventricle apex cells, but not in human heart, where this current is mediated by another family member. Forms tetrameric potassium-selective channels through which potassium ions pass in accordance with their electrochemical gradient. The channel alternates between opened and closed conformations in response to the voltage difference across the membrane. Can form functional homotetrameric channels and heterotetrameric channels that contain variable proportions of KCND2 and KCND3; channel properties depend on the type of pore-forming alpha subunits that are part of the channel. In vivo, membranes probably contain a mixture of heteromeric potassium channel complexes. Interaction with specific isoforms of the regulatory subunits KCNIP1, KCNIP2, KCNIP3 or KCNIP4 strongly increases expression at the cell surface and thereby increases channel activity; it modulates the kinetics of channel activation and inactivation, shifts the threshold for channel activation to more negative voltage values, shifts the threshold for inactivation to less negative voltages and accelerates recovery after inactivation. Likewise, interaction with DPP6 or DPP10 promotes expression at the cell membrane and regulates both channel characteristics and activity. Upon depolarization, the channel goes from a resting closed state (C state) to an activated but non-conducting state (C* state), from there, the channel may either inactivate (I state) or open (O state). The sequence is that of A-type voltage-gated potassium channel KCND2 from Rattus norvegicus (Rat).